The following is a 764-amino-acid chain: 5-methyltetrahydropteroyltriglutamate--homocysteine methyltransferase (764 aa).

5-methyltetrahydropteroyltri-L-glutamate-binding positions include 19-22 and lysine 113; that span reads RELK. L-homocysteine is bound by residues 435-437 and glutamate 488; that span reads IGS. L-methionine contacts are provided by residues 435–437 and glutamate 488; that span reads IGS. 5-methyltetrahydropteroyltri-L-glutamate contacts are provided by residues 519–520 and tryptophan 565; that span reads RC. Aspartate 603 provides a ligand contact to L-homocysteine. Aspartate 603 provides a ligand contact to L-methionine. Residue glutamate 609 participates in 5-methyltetrahydropteroyltri-L-glutamate binding. Residues histidine 645, cysteine 647, and glutamate 669 each coordinate Zn(2+). Residue histidine 698 is the Proton donor of the active site. Cysteine 730 is a Zn(2+) binding site.

Belongs to the vitamin-B12 independent methionine synthase family. It depends on Zn(2+) as a cofactor.

The enzyme catalyses 5-methyltetrahydropteroyltri-L-glutamate + L-homocysteine = tetrahydropteroyltri-L-glutamate + L-methionine. Its pathway is amino-acid biosynthesis; L-methionine biosynthesis via de novo pathway; L-methionine from L-homocysteine (MetE route): step 1/1. In terms of biological role, catalyzes the transfer of a methyl group from 5-methyltetrahydrofolate to homocysteine resulting in methionine formation. The polypeptide is 5-methyltetrahydropteroyltriglutamate--homocysteine methyltransferase (Desulforamulus reducens (strain ATCC BAA-1160 / DSM 100696 / MI-1) (Desulfotomaculum reducens)).